A 366-amino-acid chain; its full sequence is Alanine racemase (366 aa).

The active-site Proton acceptor; specific for D-alanine is lysine 35. Position 35 is an N6-(pyridoxal phosphate)lysine (lysine 35). Residue arginine 130 coordinates substrate. The active-site Proton acceptor; specific for L-alanine is tyrosine 254. Methionine 302 is a substrate binding site.

This sequence belongs to the alanine racemase family. Requires pyridoxal 5'-phosphate as cofactor.

It carries out the reaction L-alanine = D-alanine. It functions in the pathway amino-acid biosynthesis; D-alanine biosynthesis; D-alanine from L-alanine: step 1/1. Functionally, catalyzes the interconversion of L-alanine and D-alanine. May also act on other amino acids. The protein is Alanine racemase (alr) of Variovorax paradoxus (strain S110).